Here is a 359-residue protein sequence, read N- to C-terminus: RNA-binding protein 4B (359 aa).

RRM domains lie at 2 to 72 (VKLF…ASKN) and 78 to 148 (TKLH…LSTS). The CCHC-type zinc finger occupies 160–177 (SGCYRCGKEGHWSKECPV). The interval 196–359 (AVRTPYTMGY…YVDRARYSAF (164 aa)) is interaction with TNPO3.

In terms of assembly, interacts with TNPO3, which may mediate nuclear import of the protein. In terms of tissue distribution, expressed in liver and kidney (at protein level). Ubiquitously expressed.

It is found in the nucleus. The protein resides in the nucleolus. In terms of biological role, required for the translational activation of PER1 mRNA in response to circadian clock. Binds directly to the 3'-UTR of the PER1 mRNA. The polypeptide is RNA-binding protein 4B (RBM4B) (Homo sapiens (Human)).